Consider the following 143-residue polypeptide: Large ribosomal subunit protein uL11 (143 aa).

This sequence belongs to the universal ribosomal protein uL11 family. Part of the ribosomal stalk of the 50S ribosomal subunit. Interacts with L10 and the large rRNA to form the base of the stalk. L10 forms an elongated spine to which L12 dimers bind in a sequential fashion forming a multimeric L10(L12)X complex. In terms of processing, one or more lysine residues are methylated.

Its function is as follows. Forms part of the ribosomal stalk which helps the ribosome interact with GTP-bound translation factors. The chain is Large ribosomal subunit protein uL11 from Teredinibacter turnerae (strain ATCC 39867 / T7901).